The chain runs to 874 residues: Valine--tRNA ligase (874 aa).

A 'HIGH' region motif is present at residues 46 to 56; sequence PNVTGHLHIGH. The 'KMSKS' region motif lies at 523 to 527; sequence KMSKS. Lys526 is an ATP binding site. Positions 805 to 874 form a coiled coil; sequence DYVFQMKKAS…TLTDLKQKVK (70 aa).

The protein belongs to the class-I aminoacyl-tRNA synthetase family. ValS type 1 subfamily. As to quaternary structure, monomer.

The protein resides in the cytoplasm. It catalyses the reaction tRNA(Val) + L-valine + ATP = L-valyl-tRNA(Val) + AMP + diphosphate. Catalyzes the attachment of valine to tRNA(Val). As ValRS can inadvertently accommodate and process structurally similar amino acids such as threonine, to avoid such errors, it has a 'posttransfer' editing activity that hydrolyzes mischarged Thr-tRNA(Val) in a tRNA-dependent manner. The chain is Valine--tRNA ligase from Ureaplasma parvum serovar 3 (strain ATCC 700970).